The chain runs to 385 residues: D-alanyl-D-alanine-carboxypeptidase/endopeptidase AmpH (385 aa).

Residues 1 to 21 form the signal peptide; it reads MKRSLLFSAVLCAASLTSVHA.

Belongs to the beta-lactamase family.

The protein localises to the cell inner membrane. Inhibited by cefmetazole. Hydrolyzes the cross-linked dimers tetrapentapeptide (D45) and tetratetrapeptide (D44). Removes the terminal D-alanine from muropeptides and disaccharide pentapeptide M5 with a C-terminal D-Ala-D-Ala dipeptide. Associated with recycling and remodeling of peptidoglycan (PG). The polypeptide is D-alanyl-D-alanine-carboxypeptidase/endopeptidase AmpH (ampH) (Escherichia coli O157:H7).